The sequence spans 101 residues: Small ribosomal subunit protein uS14 (101 aa).

Belongs to the universal ribosomal protein uS14 family. As to quaternary structure, part of the 30S ribosomal subunit. Contacts proteins S3 and S10.

Functionally, binds 16S rRNA, required for the assembly of 30S particles and may also be responsible for determining the conformation of the 16S rRNA at the A site. The polypeptide is Small ribosomal subunit protein uS14 (Brucella anthropi (strain ATCC 49188 / DSM 6882 / CCUG 24695 / JCM 21032 / LMG 3331 / NBRC 15819 / NCTC 12168 / Alc 37) (Ochrobactrum anthropi)).